Reading from the N-terminus, the 775-residue chain is Coiled-coil domain-containing protein R3HCC1L (775 aa).

2 stretches are compositionally biased toward basic and acidic residues: residues 1 to 16 and 65 to 112; these read MQQE…KRPD and ESQR…KGAE. 2 disordered regions span residues 1-127 and 235-262; these read MQQE…HRAP and LSSD…DISV. An EJC-binding motif; may mediate interaction with the EJC region spans residues 7-27; the sequence is RCRVRTKRPDMALYVPKARRG. The segment covering 235-247 has biased composition (polar residues); it reads LSSDSETAPSSLE. Ser-671 carries the phosphoserine modification. Phosphothreonine is present on Thr-695. Residues 734 to 766 are a coiled coil; it reads RSKQSKTEREAELRKLQEARERKRLEAKQREDI. A disordered region spans residues 755-775; the sequence is RKRLEAKQREDIWEGRDQSVV.

May interact with the exon junction complex (EJC) composed at least of CASC3, EIF4A3, MAGOH and RBM8A.

The chain is Coiled-coil domain-containing protein R3HCC1L (R3hcc1l) from Mus musculus (Mouse).